Reading from the N-terminus, the 622-residue chain is Chaperone protein HscA homolog (622 aa).

The protein belongs to the heat shock protein 70 family.

In terms of biological role, chaperone involved in the maturation of iron-sulfur cluster-containing proteins. Has a low intrinsic ATPase activity which is markedly stimulated by HscB. The sequence is that of Chaperone protein HscA homolog from Burkholderia orbicola (strain MC0-3).